Consider the following 487-residue polypeptide: MSKLWGGRFSKQTDQLVDEFNASIEFDNRLIFYDLLGSQAHVKMLFQQGIIDTTDYKQITEGLDIIWKEAEQDKLEFNLSDEDIHMSIEKRLIELKGEVGKKLHTARSRNDQVAVDMNMFLCDKAIKLVNELLQNMSVIKELSEQHTKTYMPGYTHLQRAQPTTLGHHMLNYFWKFQRDASRLIDFRNRADLSPLGSGAFAGTGFNISRRSTRKDLGFTQQFENSMDAVSSRDLSLEFIFCLSSIMINLSRLAEELILWSTKEFDFIELDDAFATGSSIMPQKKNPDVPELIRGKTGRVVGHLTALATTYKGLPMAYNKDFQEDKEGLFDSLDTVESSLKLTSKILSTMTIKTKNMEKALYQDFSNATDIADYLATQGIPFRDAHAVVGQLVKHCQEHNKLFYQLTEQELDISFKQIADSLEENSQQILTQMDTTKILNIMDPIKCVHNRNSRGAPAPEALQFQLGQAQKYFHSLTEQVKTYQSFLP.

Belongs to the lyase 1 family. Argininosuccinate lyase subfamily.

The protein resides in the cytoplasm. It carries out the reaction 2-(N(omega)-L-arginino)succinate = fumarate + L-arginine. The protein operates within amino-acid biosynthesis; L-arginine biosynthesis; L-arginine from L-ornithine and carbamoyl phosphate: step 3/3. In Natranaerobius thermophilus (strain ATCC BAA-1301 / DSM 18059 / JW/NM-WN-LF), this protein is Argininosuccinate lyase.